A 283-amino-acid polypeptide reads, in one-letter code: Aldo-keto reductase Mmcs_1938 (283 aa).

Tyr-58 functions as the Proton donor in the catalytic mechanism. Gly-196, Leu-198, Val-200, Ile-236, Arg-238, Ser-239, Ala-240, Arg-244, Ser-247, Asn-248, and Arg-274 together coordinate NADPH.

This sequence belongs to the aldo/keto reductase family.

The protein is Aldo-keto reductase Mmcs_1938 of Mycobacterium sp. (strain MCS).